Reading from the N-terminus, the 380-residue chain is L-lactate dehydrogenase (380 aa).

One can recognise an FMN hydroxy acid dehydrogenase domain in the interval 1 to 380 (MIISSPNDYR…TRDSLVGLPR (380 aa)). Substrate is bound at residue tyrosine 24. Residues serine 106 and glutamine 127 each coordinate FMN. A substrate-binding site is contributed by tyrosine 129. An FMN-binding site is contributed by threonine 155. Arginine 164 contributes to the substrate binding site. Lysine 251 is an FMN binding site. Catalysis depends on histidine 275, which acts as the Proton acceptor. Arginine 278 provides a ligand contact to substrate. Residue 306–330 (DSGIRTGLDVVRMLALGAKGVLLGR) coordinates FMN.

This sequence belongs to the FMN-dependent alpha-hydroxy acid dehydrogenase family. Requires FMN as cofactor.

It localises to the cell inner membrane. It carries out the reaction (S)-lactate + A = pyruvate + AH2. Its function is as follows. Catalyzes the conversion of L-lactate to pyruvate. Is coupled to the respiratory chain. The polypeptide is L-lactate dehydrogenase (Azorhizobium caulinodans (strain ATCC 43989 / DSM 5975 / JCM 20966 / LMG 6465 / NBRC 14845 / NCIMB 13405 / ORS 571)).